Consider the following 160-residue polypeptide: SsrA-binding protein (160 aa).

The tract at residues 134-160 (RKAHDKREAVKERDWNRDKARLMRDRG) is disordered. Residues 138–160 (DKREAVKERDWNRDKARLMRDRG) are compositionally biased toward basic and acidic residues.

This sequence belongs to the SmpB family.

The protein resides in the cytoplasm. Its function is as follows. Required for rescue of stalled ribosomes mediated by trans-translation. Binds to transfer-messenger RNA (tmRNA), required for stable association of tmRNA with ribosomes. tmRNA and SmpB together mimic tRNA shape, replacing the anticodon stem-loop with SmpB. tmRNA is encoded by the ssrA gene; the 2 termini fold to resemble tRNA(Ala) and it encodes a 'tag peptide', a short internal open reading frame. During trans-translation Ala-aminoacylated tmRNA acts like a tRNA, entering the A-site of stalled ribosomes, displacing the stalled mRNA. The ribosome then switches to translate the ORF on the tmRNA; the nascent peptide is terminated with the 'tag peptide' encoded by the tmRNA and targeted for degradation. The ribosome is freed to recommence translation, which seems to be the essential function of trans-translation. This is SsrA-binding protein from Azorhizobium caulinodans (strain ATCC 43989 / DSM 5975 / JCM 20966 / LMG 6465 / NBRC 14845 / NCIMB 13405 / ORS 571).